A 603-amino-acid chain; its full sequence is Elongation factor 4 (603 aa).

One can recognise a tr-type G domain in the interval 7-189 (SRIRNFSIIA…SIVQLVPPPQ (183 aa)). Residues 19–24 (DHGKST) and 136–139 (NKID) contribute to the GTP site.

It belongs to the TRAFAC class translation factor GTPase superfamily. Classic translation factor GTPase family. LepA subfamily.

It is found in the cell inner membrane. It carries out the reaction GTP + H2O = GDP + phosphate + H(+). Required for accurate and efficient protein synthesis under certain stress conditions. May act as a fidelity factor of the translation reaction, by catalyzing a one-codon backward translocation of tRNAs on improperly translocated ribosomes. Back-translocation proceeds from a post-translocation (POST) complex to a pre-translocation (PRE) complex, thus giving elongation factor G a second chance to translocate the tRNAs correctly. Binds to ribosomes in a GTP-dependent manner. The chain is Elongation factor 4 from Microcystis aeruginosa (strain NIES-843 / IAM M-2473).